Here is a 590-residue protein sequence, read N- to C-terminus: Proline--tRNA ligase (590 aa).

This sequence belongs to the class-II aminoacyl-tRNA synthetase family. ProS type 1 subfamily. As to quaternary structure, homodimer.

The protein localises to the cytoplasm. The catalysed reaction is tRNA(Pro) + L-proline + ATP = L-prolyl-tRNA(Pro) + AMP + diphosphate. Catalyzes the attachment of proline to tRNA(Pro) in a two-step reaction: proline is first activated by ATP to form Pro-AMP and then transferred to the acceptor end of tRNA(Pro). As ProRS can inadvertently accommodate and process non-cognate amino acids such as alanine and cysteine, to avoid such errors it has two additional distinct editing activities against alanine. One activity is designated as 'pretransfer' editing and involves the tRNA(Pro)-independent hydrolysis of activated Ala-AMP. The other activity is designated 'posttransfer' editing and involves deacylation of mischarged Ala-tRNA(Pro). The misacylated Cys-tRNA(Pro) is not edited by ProRS. In Leifsonia xyli subsp. xyli (strain CTCB07), this protein is Proline--tRNA ligase.